The chain runs to 118 residues: UPF0382 membrane protein C1782.12c (118 aa).

The N-terminal stretch at 1 to 18 is a signal peptide; the sequence is MTIWNVAALTGLLSVGLG. Residues 19–40 lie on the Lumenal side of the membrane; sequence AYGSHGLQKRVQDPHLLKSWST. A helical transmembrane segment spans residues 41–61; that stretch reads ACTYLMFHSLATMAVSLHPVY. At 62 to 67 the chain is on the cytoplasmic side; that stretch reads GKSRWT. The chain crosses the membrane as a helical span at residues 68–88; it reads GPLLITGSCLFSGTIYGLCLL. Residues 89–96 are Lumenal-facing; that stretch reads PKGHSLRR. Residues 97 to 117 traverse the membrane as a helical segment; it reads ILGPLTPIGGLVMLTGWATML. A topological domain (cytoplasmic) is located at residue Val118.

The protein belongs to the UPF0382 family.

The protein localises to the endoplasmic reticulum membrane. In Schizosaccharomyces pombe (strain 972 / ATCC 24843) (Fission yeast), this protein is UPF0382 membrane protein C1782.12c.